Consider the following 210-residue polypeptide: Orotate phosphoribosyltransferase (210 aa).

5-phospho-alpha-D-ribose 1-diphosphate contacts are provided by residues R96, K100, H102, and 122-130 (EDLISTGGS). Orotate is bound at residue S126.

It belongs to the purine/pyrimidine phosphoribosyltransferase family. PyrE subfamily. In terms of assembly, homodimer. It depends on Mg(2+) as a cofactor.

The catalysed reaction is orotidine 5'-phosphate + diphosphate = orotate + 5-phospho-alpha-D-ribose 1-diphosphate. It functions in the pathway pyrimidine metabolism; UMP biosynthesis via de novo pathway; UMP from orotate: step 1/2. Functionally, catalyzes the transfer of a ribosyl phosphate group from 5-phosphoribose 1-diphosphate to orotate, leading to the formation of orotidine monophosphate (OMP). The protein is Orotate phosphoribosyltransferase of Streptococcus pneumoniae serotype 4 (strain ATCC BAA-334 / TIGR4).